The sequence spans 184 residues: Holliday junction branch migration complex subunit RuvA (184 aa).

Positions 1–62 are domain I; that stretch reads MIVGLVGEVL…EDSESLYGFV (62 aa). Residues 63–134 form a domain II region; sequence DINEKKMFDR…ELGEFDISES (72 aa). The segment at 134–135 is flexible linker; the sequence is SN. The domain III stretch occupies residues 136-184; sequence VTSSAFQEASMALQSLGFKKEQIQKALQECTATDTASLVKEALKKIQKL.

Belongs to the RuvA family. Homotetramer. Forms an RuvA(8)-RuvB(12)-Holliday junction (HJ) complex. HJ DNA is sandwiched between 2 RuvA tetramers; dsDNA enters through RuvA and exits via RuvB. An RuvB hexamer assembles on each DNA strand where it exits the tetramer. Each RuvB hexamer is contacted by two RuvA subunits (via domain III) on 2 adjacent RuvB subunits; this complex drives branch migration. In the full resolvosome a probable DNA-RuvA(4)-RuvB(12)-RuvC(2) complex forms which resolves the HJ.

It is found in the cytoplasm. The RuvA-RuvB-RuvC complex processes Holliday junction (HJ) DNA during genetic recombination and DNA repair, while the RuvA-RuvB complex plays an important role in the rescue of blocked DNA replication forks via replication fork reversal (RFR). RuvA specifically binds to HJ cruciform DNA, conferring on it an open structure. The RuvB hexamer acts as an ATP-dependent pump, pulling dsDNA into and through the RuvAB complex. HJ branch migration allows RuvC to scan DNA until it finds its consensus sequence, where it cleaves and resolves the cruciform DNA. The polypeptide is Holliday junction branch migration complex subunit RuvA (Nitratiruptor sp. (strain SB155-2)).